The chain runs to 463 residues: Lactadherin (463 aa).

Positions 1-22 (MQVSRVLAALCGMLLCASGLFA) are cleaved as a signal peptide. EGF-like domains lie at 24-61 (SGDFCDSSLCLNGGTCLTGQDNDIYCLCPEGFTGLVCN) and 64-108 (ERGP…IHCE). 3 cysteine pairs are disulfide-bonded: cysteine 28–cysteine 39, cysteine 33–cysteine 49, and cysteine 51–cysteine 60. N-linked (GlcNAc...) asparagine glycosylation is present at asparagine 61. Cystine bridges form between cysteine 68-cysteine 79, cysteine 73-cysteine 96, cysteine 98-cysteine 107, cysteine 148-cysteine 303, cysteine 290-cysteine 294, and cysteine 308-cysteine 463. The Cell attachment site signature appears at 87–89 (RGD). F5/8 type C domains follow at residues 148-303 (CSTQ…LLGC) and 308-463 (CSEP…LLGC). N-linked (GlcNAc...) asparagine glycosylation occurs at asparagine 266. N-linked (GlcNAc...) asparagine glycans are attached at residues asparagine 316 and asparagine 426.

Post-translationally, N-glycosylated. Isoform 1 also exists in both an O-glycosylated and a non-O-glycosylated form. As to expression, mammary epithelial cell surfaces and spermatozoan. Isoform 2 is present in brain, heart, kidney and spleen and at low levels in lung, liver, small intestine and testis.

Its subcellular location is the membrane. The protein localises to the secreted. It localises to the cytoplasmic vesicle. It is found in the secretory vesicle. The protein resides in the acrosome membrane. Functionally, contributes to phagocytic removal of apoptotic cells in many tissues. Specific ligand for the alpha-v/beta-3 and alpha-v/beta-5 receptors. Also binds to phosphatidylserine-enriched cell surfaces in a receptor-independent manner. Zona pellucida-binding protein which may play a role in gamete interaction. Plays an important role in the maintenance of intestinal epithelial homeostasis and the promotion of mucosal healing. Promotes VEGF-dependent neovascularization. This Mus musculus (Mouse) protein is Lactadherin (Mfge8).